A 573-amino-acid polypeptide reads, in one-letter code: Glutamate--tRNA ligase (573 aa).

The 'HIGH' region motif lies at 106–116; the sequence is PNPDGAFHLGN.

Belongs to the class-I aminoacyl-tRNA synthetase family. Glutamate--tRNA ligase type 2 subfamily.

It localises to the cytoplasm. The catalysed reaction is tRNA(Glu) + L-glutamate + ATP = L-glutamyl-tRNA(Glu) + AMP + diphosphate. Its function is as follows. Catalyzes the attachment of glutamate to tRNA(Glu) in a two-step reaction: glutamate is first activated by ATP to form Glu-AMP and then transferred to the acceptor end of tRNA(Glu). In Thermococcus onnurineus (strain NA1), this protein is Glutamate--tRNA ligase.